Reading from the N-terminus, the 365-residue chain is 3-dehydroquinate synthase (365 aa).

Residues 69–74 (DGEKYK), 103–107 (GVIGD), 127–128 (TT), Lys140, and Lys149 each bind NAD(+). Residues Glu182, His245, and His262 each contribute to the Zn(2+) site.

Belongs to the sugar phosphate cyclases superfamily. Dehydroquinate synthase family. The cofactor is Co(2+). Zn(2+) is required as a cofactor. NAD(+) serves as cofactor.

It localises to the cytoplasm. The enzyme catalyses 7-phospho-2-dehydro-3-deoxy-D-arabino-heptonate = 3-dehydroquinate + phosphate. It functions in the pathway metabolic intermediate biosynthesis; chorismate biosynthesis; chorismate from D-erythrose 4-phosphate and phosphoenolpyruvate: step 2/7. Functionally, catalyzes the conversion of 3-deoxy-D-arabino-heptulosonate 7-phosphate (DAHP) to dehydroquinate (DHQ). The polypeptide is 3-dehydroquinate synthase (Pseudomonas entomophila (strain L48)).